A 158-amino-acid polypeptide reads, in one-letter code: E3 ubiquitin ligase complex SCF subunit sconC (158 aa).

The tract at residues 100-158 (ILAANYLDIKALLDVGCKTVANMIKGKSPEEIRKTFNIQNDFTPEEEDQIRRENEWAEE) is interaction with the F-box domain of F-box proteins.

Belongs to the SKP1 family. As to quaternary structure, component of the SCF (SKP1-CUL1-F-box protein) E3 ubiquitin ligase complexes.

Its pathway is protein modification; protein ubiquitination. Functionally, essential component of the SCF (SKP1-CUL1-F-box protein) E3 ubiquitin ligase complexes, which mediate the ubiquitination and subsequent proteasomal degradation of target proteins. Controls sulfur metabolite repression, probably by mediating the inactivation or degradation of the metR transcription factor. The chain is E3 ubiquitin ligase complex SCF subunit sconC (sconC) from Aspergillus fumigatus (strain CBS 144.89 / FGSC A1163 / CEA10) (Neosartorya fumigata).